The following is a 193-amino-acid chain: Cysteine and glycine-rich protein 2 (193 aa).

The LIM zinc-binding 1 domain maps to 10–61 (CGACGRTVYHAEEVQCDGRSFHRCCFLCMVCRKNLDSTTVAIHDEEIYCKSC). A Nuclear localization signal motif is present at residues 64-69 (KKYGPK). Lys91 is covalently cross-linked (Glycyl lysine isopeptide (Lys-Gly) (interchain with G-Cter in SUMO2)). N6-acetyllysine is present on residues Lys112 and Lys131. In terms of domain architecture, LIM zinc-binding 2 spans 119 to 170 (CSRCGDSVYAAEKIIGAGKPWHKNCFRCAKCGKSLESTTLTEKEGEIYCKGC). Lys137 is modified (N6-acetyllysine; alternate). An N6-succinyllysine; alternate modification is found at Lys137. Lys161 carries the N6-acetyllysine modification.

In terms of assembly, interacts with KAT14. The LIM domain 1 is necessary and sufficient for this interaction. Interacts with GLRX3.

The protein localises to the nucleus. In terms of biological role, drastically down-regulated in response to PDGF-BB or cell injury, that promote smooth muscle cell proliferation and dedifferentiation. Seems to play a role in the development of the embryonic vascular system. The protein is Cysteine and glycine-rich protein 2 (CSRP2) of Bos taurus (Bovine).